Consider the following 118-residue polypeptide: Melanoma antigen recognized by T-cells 1 (118 aa).

Residues 27 to 47 (AAGIGILTVILGVLLLIGCWY) form a helical membrane-spanning segment. Topologically, residues 48-118 (CRRRNGYRAL…AEQSPPPYSP (71 aa)) are cytoplasmic. Positions 78-118 (GFDHRDSKVSLQEKNCEPVVPNAPPAYEKLSAEQSPPPYSP) are disordered. Ser108 carries the phosphoserine modification.

In terms of assembly, interacts with PMEL. Interacts with GPR143. In terms of processing, acylated. Expression is restricted to melanoma and melanocyte cell lines and retina.

Its subcellular location is the endoplasmic reticulum membrane. The protein localises to the golgi apparatus. It is found in the trans-Golgi network membrane. The protein resides in the melanosome. Its function is as follows. Involved in melanosome biogenesis by ensuring the stability of GPR143. Plays a vital role in the expression, stability, trafficking, and processing of melanocyte protein PMEL, which is critical to the formation of stage II melanosomes. The chain is Melanoma antigen recognized by T-cells 1 (MLANA) from Homo sapiens (Human).